The sequence spans 302 residues: Glycine--tRNA ligase alpha subunit (302 aa).

The protein belongs to the class-II aminoacyl-tRNA synthetase family. In terms of assembly, tetramer of two alpha and two beta subunits.

It is found in the cytoplasm. The enzyme catalyses tRNA(Gly) + glycine + ATP = glycyl-tRNA(Gly) + AMP + diphosphate. The protein is Glycine--tRNA ligase alpha subunit of Enterococcus faecalis (strain ATCC 700802 / V583).